We begin with the raw amino-acid sequence, 155 residues long: Small ribosomal subunit protein uS7c (155 aa).

The protein belongs to the universal ribosomal protein uS7 family. Part of the 30S ribosomal subunit.

The protein resides in the plastid. It is found in the chloroplast. In terms of biological role, one of the primary rRNA binding proteins, it binds directly to 16S rRNA where it nucleates assembly of the head domain of the 30S subunit. In Metasequoia glyptostroboides (Dawn redwood), this protein is Small ribosomal subunit protein uS7c (rps7).